The sequence spans 707 residues: Leukotoxin export ATP-binding protein LtxB (707 aa).

In terms of domain architecture, Peptidase C39 spans 4 to 125 (QKNTNLALQA…ERYQSKVILI (122 aa)). Residue histidine 83 is part of the active site. Transmembrane regions (helical) follow at residues 158–178 (LIVS…FQVV), 191–211 (LNVI…LGGL), 269–289 (ALTS…MWYY), 295–315 (LVVL…SPIL), and 387–407 (AVMV…DLSI). Residues 158 to 436 (LIVSIFLQIF…LAQIWQDFQQ (279 aa)) form the ABC transmembrane type-1 domain. Residues 468–703 (ISFRNIKFRY…EKGLYSYLHQ (236 aa)) form the ABC transporter domain. 502-509 (GRSGSGKS) lines the ATP pocket.

This sequence belongs to the ABC transporter superfamily. Protein-1 exporter (TC 3.A.1.109) family. In terms of assembly, probably part of a complex composed of LtxB, LtxD and TdeA, which forms a single transport channel across the two membranes.

The protein localises to the cell inner membrane. It carries out the reaction ATP + H2O + proteinSide 1 = ADP + phosphate + proteinSide 2.. In terms of biological role, involved in the export of the LtxA leukotoxin. The polypeptide is Leukotoxin export ATP-binding protein LtxB (Aggregatibacter actinomycetemcomitans (Actinobacillus actinomycetemcomitans)).